The primary structure comprises 218 residues: Cytochrome b6 (218 aa).

Residues Ile-35 to Phe-55 traverse the membrane as a helical segment. Cys-38 provides a ligand contact to heme c. The heme b site is built by His-89 and His-103. Transmembrane regions (helical) follow at residues Ala-93–Phe-113, Leu-119–Tyr-139, and Leu-189–Ile-209. Residues His-190 and His-205 each contribute to the heme b site.

The protein belongs to the cytochrome b family. PetB subfamily. In terms of assembly, the 4 large subunits of the cytochrome b6-f complex are cytochrome b6, subunit IV (17 kDa polypeptide, PetD), cytochrome f and the Rieske protein, while the 4 small subunits are PetG, PetL, PetM and PetN. The complex functions as a dimer. Requires heme b as cofactor. Heme c serves as cofactor.

Its subcellular location is the cellular thylakoid membrane. Component of the cytochrome b6-f complex, which mediates electron transfer between photosystem II (PSII) and photosystem I (PSI), cyclic electron flow around PSI, and state transitions. This Prochlorococcus marinus (strain MIT 9515) protein is Cytochrome b6.